We begin with the raw amino-acid sequence, 568 residues long: Pentatricopeptide repeat-containing protein At1g73400, mitochondrial (568 aa).

Residues 1–55 constitute a mitochondrion transit peptide; it reads MMRRLVSYFVRSRFSLHLSTTPPQRSALFSHILSSHLDSIQINKKISSFSVHRFC. 8 PPR repeats span residues 233 to 263, 267 to 301, 302 to 336, 340 to 374, 375 to 409, 410 to 444, 445 to 479, and 480 to 514; these read EINA…MRHR, DANT…GHKP, ENFT…GSAV, TAKT…GCLP, DVST…GYPP, DIVT…RCAP, SVQT…DCVQ, and DVET…GLKL.

The protein belongs to the PPR family. P subfamily.

The protein resides in the mitochondrion. This chain is Pentatricopeptide repeat-containing protein At1g73400, mitochondrial, found in Arabidopsis thaliana (Mouse-ear cress).